A 193-amino-acid polypeptide reads, in one-letter code: Riboflavin kinase (193 aa).

The H-T-H motif-like stretch occupies residues 1–59; sequence MGISQQAASQHLRELEDEGLITRNAEGKGISVMVTDKGRHELLRVYNILHDSLHSRPDH. Positions 60 to 193 are riboflavin kinase; sequence VEITGTLVSG…TIRIPLEQED (134 aa). 69 to 74 is a CDP binding site; sequence GMNEGA. Thr98 and Asn100 together coordinate Mg(2+). Positions 156 and 164 each coordinate FMN. Position 169–172 (169–172) interacts with CDP; sequence LDIR.

Belongs to the archaeal riboflavin kinase family. Mg(2+) serves as cofactor.

The enzyme catalyses riboflavin + CTP = CDP + FMN + H(+). It participates in cofactor biosynthesis; FMN biosynthesis; FMN from riboflavin (CTP route): step 1/1. Functionally, catalyzes the CTP-dependent phosphorylation of riboflavin (vitamin B2) to form flavin mononucleotide (FMN). The protein is Riboflavin kinase (ribK) of Cenarchaeum symbiosum (strain A).